Here is a 215-residue protein sequence, read N- to C-terminus: MRVILLGAPGAGKGTQARYITEKFGIPQISTGDMLRAAVKAGTELGLKAKSVMDAGGLVSDDLIINLVKERIAQPDCANGFLFDGFPRTIPQAEALRDAGVTLDHVVEIAVDDEEIVKRLSGRRVHPASGRVYHTEYNPPKVAGKDDVSGEELVQREDDKEETVRHRLSVYHSQTKPLVDFYQKLSAETGTPKYSHIPGVGSVEDITAKTLAALD.

Residue 10–15 (GAGKGT) coordinates ATP. The NMP stretch occupies residues 30-59 (STGDMLRAAVKAGTELGLKAKSVMDAGGLV). Residues Thr31, Arg36, 57–59 (GLV), 85–88 (GFPR), and Gln92 contribute to the AMP site. An LID region spans residues 122 to 159 (GRRVHPASGRVYHTEYNPPKVAGKDDVSGEELVQREDD). Residues Arg123 and 132–133 (VY) contribute to the ATP site. The AMP site is built by Arg156 and Arg167. Gly201 contributes to the ATP binding site.

This sequence belongs to the adenylate kinase family. As to quaternary structure, monomer.

The protein localises to the cytoplasm. It catalyses the reaction AMP + ATP = 2 ADP. The protein operates within purine metabolism; AMP biosynthesis via salvage pathway; AMP from ADP: step 1/1. Its function is as follows. Catalyzes the reversible transfer of the terminal phosphate group between ATP and AMP. Plays an important role in cellular energy homeostasis and in adenine nucleotide metabolism. The chain is Adenylate kinase from Ectopseudomonas mendocina (strain ymp) (Pseudomonas mendocina).